A 131-amino-acid polypeptide reads, in one-letter code: Small ribosomal subunit protein eS24 (131 aa).

Positions 93–131 are disordered; that stretch reads RHGLYEKKKTSRKQRKERKNRMKKVRGTKKASVGAAGKK. The span at 101-121 shows a compositional bias: basic residues; sequence KTSRKQRKERKNRMKKVRGTK.

Belongs to the eukaryotic ribosomal protein eS24 family. As to quaternary structure, component of the small ribosomal subunit. Part of the small subunit (SSU) processome, composed of more than 70 proteins and the RNA chaperone small nucleolar RNA (snoRNA) U3.

The protein localises to the cytoplasm. Its subcellular location is the nucleus. It is found in the nucleolus. Its function is as follows. Component of the small ribosomal subunit. The ribosome is a large ribonucleoprotein complex responsible for the synthesis of proteins in the cell. Required for processing of pre-rRNA and maturation of 40S ribosomal subunits. Part of the small subunit (SSU) processome, first precursor of the small eukaryotic ribosomal subunit. During the assembly of the SSU processome in the nucleolus, many ribosome biogenesis factors, an RNA chaperone and ribosomal proteins associate with the nascent pre-rRNA and work in concert to generate RNA folding, modifications, rearrangements and cleavage as well as targeted degradation of pre-ribosomal RNA by the RNA exosome. The protein is Small ribosomal subunit protein eS24 (rps24) of Ictalurus punctatus (Channel catfish).